Here is a 176-residue protein sequence, read N- to C-terminus: Interleukin-7 (176 aa).

Residues 1–25 form the signal peptide; it reads MFHVSFRYIFGIPPLILVLLPVASS. 3 cysteine pairs are disulfide-bonded: cysteine 27-cysteine 165, cysteine 58-cysteine 153, and cysteine 71-cysteine 116. N-linked (GlcNAc...) asparagine glycosylation is found at asparagine 94, asparagine 115, and asparagine 140. The tract at residues 118–143 is disordered; it reads SKGKGRKPPSLSEAQPTKNLEENKSS.

Belongs to the IL-7/IL-9 family. As to quaternary structure, interacts with IL7R and CSF2RG.

The protein localises to the secreted. Its function is as follows. Hematopoietic cytokine that plays an essential role in the development, expansion, and survival of naive and memory T-cells and B-cells thereby regulating the number of mature lymphocytes and maintaining lymphoid homeostasis. Mechanistically, exerts its biological effects through a receptor composed of IL7RA subunit and the cytokine receptor common subunit gamma/CSF2RG. Binding to the receptor leads to activation of various kinases including JAK1 or JAK3 depending on the cell type and subsequently propagation of signals through activation of several downstream signaling pathways including the PI3K/Akt/mTOR or the JAK-STAT5. In Bos taurus (Bovine), this protein is Interleukin-7 (IL7).